A 248-amino-acid polypeptide reads, in one-letter code: Proteasome subunit alpha type-3 (248 aa).

The protein belongs to the peptidase T1A family. The 26S proteasome consists of a 20S proteasome core and two 19S regulatory subunits. The 20S proteasome core is composed of 28 subunits that are arranged in four stacked rings, resulting in a barrel-shaped structure. The two end rings are each formed by seven alpha subunits, and the two central rings are each formed by seven beta subunits. The catalytic chamber with the active sites is on the inside of the barrel.

The protein localises to the cytoplasm. The protein resides in the nucleus. In terms of biological role, the proteasome is a multicatalytic proteinase complex which is characterized by its ability to cleave peptides with Arg, Phe, Tyr, Leu, and Glu adjacent to the leaving group at neutral or slightly basic pH. The proteasome has an ATP-dependent proteolytic activity. The sequence is that of Proteasome subunit alpha type-3 (psmA3) from Dictyostelium discoideum (Social amoeba).